The following is a 303-amino-acid chain: Aspartate carbamoyltransferase catalytic subunit (303 aa).

Residues Arg-54 and Thr-55 each coordinate carbamoyl phosphate. Lys-82 contacts L-aspartate. Carbamoyl phosphate is bound by residues Arg-104, His-132, and Gln-135. L-aspartate contacts are provided by Arg-165 and Arg-221. Carbamoyl phosphate-binding residues include Gly-261 and Pro-262.

This sequence belongs to the aspartate/ornithine carbamoyltransferase superfamily. ATCase family. In terms of assembly, heterododecamer (2C3:3R2) of six catalytic PyrB chains organized as two trimers (C3), and six regulatory PyrI chains organized as three dimers (R2).

It catalyses the reaction carbamoyl phosphate + L-aspartate = N-carbamoyl-L-aspartate + phosphate + H(+). It functions in the pathway pyrimidine metabolism; UMP biosynthesis via de novo pathway; (S)-dihydroorotate from bicarbonate: step 2/3. Functionally, catalyzes the condensation of carbamoyl phosphate and aspartate to form carbamoyl aspartate and inorganic phosphate, the committed step in the de novo pyrimidine nucleotide biosynthesis pathway. The protein is Aspartate carbamoyltransferase catalytic subunit of Koribacter versatilis (strain Ellin345).